Here is an 803-residue protein sequence, read N- to C-terminus: Phenylalanine--tRNA ligase beta subunit (803 aa).

Residues 39–150 form the tRNA-binding domain; sequence AKVLAPFTIA…ADAPVGAAYA (112 aa). A B5 domain is found at 400-475; it reads ADDKIIDFPL…RIVGVDKVPL (76 aa). Residues Asp-453, Asp-459, Glu-462, and Glu-463 each contribute to the Mg(2+) site. An FDX-ACB domain is found at 709–802; the sequence is SAFHPVSRDF…VTKKTGGSLR (94 aa).

The protein belongs to the phenylalanyl-tRNA synthetase beta subunit family. Type 1 subfamily. As to quaternary structure, tetramer of two alpha and two beta subunits. Mg(2+) serves as cofactor.

It is found in the cytoplasm. It catalyses the reaction tRNA(Phe) + L-phenylalanine + ATP = L-phenylalanyl-tRNA(Phe) + AMP + diphosphate + H(+). The protein is Phenylalanine--tRNA ligase beta subunit of Rhodopseudomonas palustris (strain ATCC BAA-98 / CGA009).